The primary structure comprises 437 residues: GTPase Era, mitochondrial (437 aa).

A mitochondrion-targeting transit peptide spans 1–43 (MAAPSWRGARLVQSVLRVWQVGPHVARERVIPFSSLLGFQRRC). The region spanning 112–330 (RVLRVVLLGA…QYLLTQAQPG (219 aa)) is the Era-type G domain. Positions 120 to 127 (GAPNAGKS) are G1. 120–127 (GAPNAGKS) serves as a coordination point for GTP. Residues 146-150 (HTTRC) are G2. Positions 167–170 (DTPG) are G3. 167–171 (DTPGI) is a binding site for GTP. At Ser173 the chain carries Phosphoserine. Position 236-239 (236-239 (NKVD)) interacts with GTP. Residues 236–239 (NKVD) are G4. A disordered region spans residues 271–290 (HSHPGTHCPSPAVKDPNTQS). The interval 308–310 (LSA) is G5. A KH type-2 domain is found at 360–437 (LPQEVPYNVQ…DIRLSVKLLK (78 aa)).

This sequence belongs to the TRAFAC class TrmE-Era-EngA-EngB-Septin-like GTPase superfamily. Era GTPase family.

The protein localises to the mitochondrion matrix. It localises to the mitochondrion inner membrane. Functionally, probable GTPase that plays a role in the mitochondrial ribosomal small subunit assembly. Specifically binds the 12S mitochondrial rRNA (12S mt-rRNA) to a 33 nucleotide section delineating the 3' terminal stem-loop region. May act as a chaperone that protects the 12S mt-rRNA on the 28S mitoribosomal subunit during ribosomal small subunit assembly. This Homo sapiens (Human) protein is GTPase Era, mitochondrial (ERAL1).